Reading from the N-terminus, the 336-residue chain is Coproporphyrin III ferrochelatase (336 aa).

Residues S52 and Y116 each coordinate Fe-coproporphyrin III. Fe(2+) contacts are provided by H172 and E255.

The protein belongs to the ferrochelatase family.

Its subcellular location is the cytoplasm. It carries out the reaction Fe-coproporphyrin III + 2 H(+) = coproporphyrin III + Fe(2+). It participates in porphyrin-containing compound metabolism; protoheme biosynthesis. In terms of biological role, involved in coproporphyrin-dependent heme b biosynthesis. Catalyzes the insertion of ferrous iron into coproporphyrin III to form Fe-coproporphyrin III. This chain is Coproporphyrin III ferrochelatase, found in Mycolicibacterium paratuberculosis (strain ATCC BAA-968 / K-10) (Mycobacterium paratuberculosis).